A 122-amino-acid polypeptide reads, in one-letter code: Large ribosomal subunit protein uL14 (122 aa).

Belongs to the universal ribosomal protein uL14 family. As to quaternary structure, part of the 50S ribosomal subunit. Forms a cluster with proteins L3 and L19. In the 70S ribosome, L14 and L19 interact and together make contacts with the 16S rRNA in bridges B5 and B8.

Functionally, binds to 23S rRNA. Forms part of two intersubunit bridges in the 70S ribosome. The protein is Large ribosomal subunit protein uL14 of Rippkaea orientalis (strain PCC 8801 / RF-1) (Cyanothece sp. (strain PCC 8801)).